The chain runs to 270 residues: NAD kinase (270 aa).

Aspartate 45 serves as the catalytic Proton acceptor. Residues 45 to 46 (DG), 121 to 122 (NE), lysine 147, aspartate 149, 160 to 165 (TAYSKS), and alanine 184 each bind NAD(+).

It belongs to the NAD kinase family. Requires a divalent metal cation as cofactor.

It localises to the cytoplasm. It catalyses the reaction NAD(+) + ATP = ADP + NADP(+) + H(+). Functionally, involved in the regulation of the intracellular balance of NAD and NADP, and is a key enzyme in the biosynthesis of NADP. Catalyzes specifically the phosphorylation on 2'-hydroxyl of the adenosine moiety of NAD to yield NADP. The polypeptide is NAD kinase (Lactobacillus johnsonii (strain CNCM I-12250 / La1 / NCC 533)).